The chain runs to 469 residues: Threonine synthase (469 aa).

Lys-112 is subject to N6-(pyridoxal phosphate)lysine.

This sequence belongs to the threonine synthase family. The cofactor is pyridoxal 5'-phosphate.

The catalysed reaction is O-phospho-L-homoserine + H2O = L-threonine + phosphate. The protein operates within amino-acid biosynthesis; L-threonine biosynthesis; L-threonine from L-aspartate: step 5/5. Catalyzes the gamma-elimination of phosphate from L-phosphohomoserine and the beta-addition of water to produce L-threonine. The chain is Threonine synthase (thrC) from Pseudomonas aeruginosa (strain ATCC 15692 / DSM 22644 / CIP 104116 / JCM 14847 / LMG 12228 / 1C / PRS 101 / PAO1).